A 534-amino-acid chain; its full sequence is Light-independent protochlorophyllide reductase subunit B (534 aa).

Aspartate 36 is a [4Fe-4S] cluster binding site. Residue aspartate 274 is the Proton donor of the active site. Glycine 409–leucine 410 is a substrate binding site. A disordered region spans residues aspartate 426–aspartate 446.

It belongs to the ChlB/BchB/BchZ family. Protochlorophyllide reductase is composed of three subunits; BchL, BchN and BchB. Forms a heterotetramer of two BchB and two BchN subunits. Requires [4Fe-4S] cluster as cofactor.

It catalyses the reaction chlorophyllide a + oxidized 2[4Fe-4S]-[ferredoxin] + 2 ADP + 2 phosphate = protochlorophyllide a + reduced 2[4Fe-4S]-[ferredoxin] + 2 ATP + 2 H2O. Its pathway is porphyrin-containing compound metabolism; bacteriochlorophyll biosynthesis (light-independent). Component of the dark-operative protochlorophyllide reductase (DPOR) that uses Mg-ATP and reduced ferredoxin to reduce ring D of protochlorophyllide (Pchlide) to form chlorophyllide a (Chlide). This reaction is light-independent. The NB-protein (BchN-BchB) is the catalytic component of the complex. In Cereibacter sphaeroides (strain ATCC 17029 / ATH 2.4.9) (Rhodobacter sphaeroides), this protein is Light-independent protochlorophyllide reductase subunit B.